We begin with the raw amino-acid sequence, 327 residues long: Methionyl-tRNA formyltransferase (327 aa).

121 to 124 (SLLP) is a (6S)-5,6,7,8-tetrahydrofolate binding site.

This sequence belongs to the Fmt family.

It catalyses the reaction L-methionyl-tRNA(fMet) + (6R)-10-formyltetrahydrofolate = N-formyl-L-methionyl-tRNA(fMet) + (6S)-5,6,7,8-tetrahydrofolate + H(+). Functionally, attaches a formyl group to the free amino group of methionyl-tRNA(fMet). The formyl group appears to play a dual role in the initiator identity of N-formylmethionyl-tRNA by promoting its recognition by IF2 and preventing the misappropriation of this tRNA by the elongation apparatus. This Burkholderia pseudomallei (strain 1710b) protein is Methionyl-tRNA formyltransferase.